The following is a 470-amino-acid chain: Protein ASPARTIC PROTEASE IN GUARD CELL 2 (470 aa).

The first 19 residues, 1-19 (MLLPLFFFFLHLHLHLSSS), serve as a signal peptide directing secretion. Residues 131–466 (YFVRIGVGSP…DGANGFVGFG (336 aa)) form the Peptidase A1 domain. The active site involves Asp-149. 6 disulfides stabilise this stretch: Cys-159/Cys-162, Cys-165/Cys-239, Cys-186/Cys-204, Cys-191/Cys-199, Cys-278/Cys-470, and Cys-389/Cys-431. Residue Asp-350 is part of the active site.

It belongs to the peptidase A1 family.

In terms of biological role, aspartic protease that may be involved in drought avoidance through abscisic acid signaling. The chain is Protein ASPARTIC PROTEASE IN GUARD CELL 2 (ASPG2) from Arabidopsis thaliana (Mouse-ear cress).